The following is a 120-amino-acid chain: U13-lycotoxin-Ls1e (120 aa).

The first 16 residues, 1–16 (MKILFVLISILYAVYC), serve as a signal peptide directing secretion. A propeptide spanning residues 17–54 (FSSEEDVDSAYLANELEPVEDINSEQYAALEPKEEQER) is cleaved from the precursor. 4 disulfides stabilise this stretch: Cys56-Cys70, Cys63-Cys76, Cys69-Cys87, and Cys78-Cys85. Residues 56–95 (CAGMGRDCKDDCDCCLNIATCNCWFGRYFCSCTFGDYQTC) form the Agouti domain.

The protein belongs to the neurotoxin 05 (agouti) family. In terms of processing, contains 6 disulfide bonds. As to expression, expressed by the venom gland.

The protein resides in the secreted. The sequence is that of U13-lycotoxin-Ls1e from Lycosa singoriensis (Wolf spider).